Reading from the N-terminus, the 223-residue chain is Endonuclease V (223 aa).

Mg(2+) contacts are provided by Asp35 and Asp103.

The protein belongs to the endonuclease V family. Mg(2+) is required as a cofactor.

It is found in the cytoplasm. It carries out the reaction Endonucleolytic cleavage at apurinic or apyrimidinic sites to products with a 5'-phosphate.. Functionally, DNA repair enzyme involved in the repair of deaminated bases. Selectively cleaves double-stranded DNA at the second phosphodiester bond 3' to a deoxyinosine leaving behind the intact lesion on the nicked DNA. The sequence is that of Endonuclease V from Cronobacter sakazakii (strain ATCC BAA-894) (Enterobacter sakazakii).